Reading from the N-terminus, the 130-residue chain is uncharacterized protein (130 aa).

Residues 1-104 (MRPGSSPRAP…RGRWGLRGGP (104 aa)) are disordered. A compositionally biased stretch (low complexity) spans 88–97 (RRQPGPQRGR).

This is an uncharacterized protein from Homo sapiens (Human).